A 1045-amino-acid polypeptide reads, in one-letter code: Probable beta-glucosidase E (1045 aa).

The disordered stretch occupies residues 1–74; the sequence is MAPPDSTHGG…SGSYQLRPVD (74 aa). Topologically, residues 1 to 163 are cytoplasmic; that stretch reads MAPPDSTHGG…PVKYARIWWR (163 aa). A compositionally biased stretch (basic and acidic residues) spans 11–20; sequence SFRDHLKTND. Residues 164-184 form a helical; Signal-anchor for type II membrane protein membrane-spanning segment; sequence TLLAVIVTLAVVVWGFLSFAV. The Extracellular segment spans residues 185–1045; the sequence is SHREEPKVWP…SRDLPLMGEY (861 aa). 3 N-linked (GlcNAc...) asparagine glycosylation sites follow: Asn-226, Asn-234, and Asn-402. Asp-430 is a catalytic residue. N-linked (GlcNAc...) asparagine glycans are attached at residues Asn-473, Asn-512, Asn-577, Asn-893, Asn-902, and Asn-988.

Belongs to the glycosyl hydrolase 3 family.

It is found in the cell membrane. The catalysed reaction is Hydrolysis of terminal, non-reducing beta-D-glucosyl residues with release of beta-D-glucose.. It functions in the pathway glycan metabolism; cellulose degradation. Functionally, beta-glucosidases are one of a number of cellulolytic enzymes involved in the degradation of cellulosic biomass. Catalyzes the last step releasing glucose from the inhibitory cellobiose. The sequence is that of Probable beta-glucosidase E (bglE) from Neosartorya fischeri (strain ATCC 1020 / DSM 3700 / CBS 544.65 / FGSC A1164 / JCM 1740 / NRRL 181 / WB 181) (Aspergillus fischerianus).